Here is a 212-residue protein sequence, read N- to C-terminus: Uridine kinase (212 aa).

13-20 (GGSGSGKT) serves as a coordination point for ATP.

This sequence belongs to the uridine kinase family.

Its subcellular location is the cytoplasm. The catalysed reaction is uridine + ATP = UMP + ADP + H(+). It carries out the reaction cytidine + ATP = CMP + ADP + H(+). Its pathway is pyrimidine metabolism; CTP biosynthesis via salvage pathway; CTP from cytidine: step 1/3. The protein operates within pyrimidine metabolism; UMP biosynthesis via salvage pathway; UMP from uridine: step 1/1. The chain is Uridine kinase from Bacillus cereus (strain G9842).